The following is a 132-amino-acid chain: Large ribosomal subunit protein bL17 (132 aa).

Belongs to the bacterial ribosomal protein bL17 family. As to quaternary structure, part of the 50S ribosomal subunit. Contacts protein L32.

This Shewanella sediminis (strain HAW-EB3) protein is Large ribosomal subunit protein bL17.